We begin with the raw amino-acid sequence, 404 residues long: S-adenosylmethionine synthase (404 aa).

141–146 (GQGSVD) lines the ATP pocket.

This sequence belongs to the AdoMet synthase 2 family. Requires Mg(2+) as cofactor.

It catalyses the reaction L-methionine + ATP + H2O = S-adenosyl-L-methionine + phosphate + diphosphate. The protein operates within amino-acid biosynthesis; S-adenosyl-L-methionine biosynthesis; S-adenosyl-L-methionine from L-methionine: step 1/1. In terms of biological role, catalyzes the formation of S-adenosylmethionine from methionine and ATP. This Methanococcus vannielii (strain ATCC 35089 / DSM 1224 / JCM 13029 / OCM 148 / SB) protein is S-adenosylmethionine synthase.